We begin with the raw amino-acid sequence, 149 residues long: Large ribosomal subunit protein uL15 (149 aa).

Residues 21–54 (RGSASGLGCTSGKGNKGQNARSGGGVRPGFEGGQ) form a disordered region. 2 stretches are compositionally biased toward gly residues: residues 23 to 35 (SASG…GKGN) and 42 to 52 (SGGGVRPGFEG).

The protein belongs to the universal ribosomal protein uL15 family. As to quaternary structure, part of the 50S ribosomal subunit.

Its function is as follows. Binds to the 23S rRNA. The protein is Large ribosomal subunit protein uL15 of Lawsonia intracellularis (strain PHE/MN1-00).